A 426-amino-acid polypeptide reads, in one-letter code: Probable imidazolonepropionase (426 aa).

4-imidazolone-5-propanoate is bound by residues Y158 and H192. Y158 lines the N-formimidoyl-L-glutamate pocket. Residue H260 participates in Fe(3+) binding. H260 contributes to the Zn(2+) binding site. E263 is a binding site for 4-imidazolone-5-propanoate. D334 contributes to the Fe(3+) binding site. Position 334 (D334) interacts with Zn(2+). N336 lines the N-formimidoyl-L-glutamate pocket.

This sequence belongs to the metallo-dependent hydrolases superfamily. HutI family. It depends on Zn(2+) as a cofactor. Requires Fe(3+) as cofactor.

The enzyme catalyses 4-imidazolone-5-propanoate + H2O = N-formimidoyl-L-glutamate. The protein operates within amino-acid degradation; L-histidine degradation into L-glutamate; N-formimidoyl-L-glutamate from L-histidine: step 3/3. The polypeptide is Probable imidazolonepropionase (amdhd1) (Dictyostelium discoideum (Social amoeba)).